The primary structure comprises 1176 residues: Pesticidal crystal protein Cry1Aa (1176 aa).

Belongs to the delta endotoxin family.

Promotes colloidosmotic lysis by binding to the midgut epithelial cells of many lepidopteran larvae. The polypeptide is Pesticidal crystal protein Cry1Aa (cry1Aa) (Bacillus thuringiensis subsp. entomocidus).